Consider the following 511-residue polypeptide: Aminotransferase FGSG_17085 (511 aa).

165 to 166 provides a ligand contact to pyridoxal 5'-phosphate; that stretch reads GA. Y200 is a binding site for substrate. D310 serves as a coordination point for pyridoxal 5'-phosphate. An N6-(pyridoxal phosphate)lysine modification is found at K339. Position 371 (G371) interacts with substrate. 372 to 373 is a pyridoxal 5'-phosphate binding site; the sequence is HT.

The protein belongs to the class-III pyridoxal-phosphate-dependent aminotransferase family. The cofactor is pyridoxal 5'-phosphate.

The protein operates within secondary metabolite biosynthesis. In terms of biological role, aminotransferase; part of the gene cluster that mediates the biosynthesis of the lipopeptide fusaristatin A. Fusaristatin A consists of a polyketide chain linked to three amino acid residues glutamine (Gln), dehydroalanine (dehydro-Ala), and beta-aminoisobutyric acid. The biosynthesis starts with formation of a linear polyketide chain by the highly reducing polyketide synthase PKS6. The gene cluster does not contain an acyl-CoA ligase or an acyl-transferase, and it is therefore predicted that the polyketide is transferred directly to the nonribosomal peptide synthetase NRPS7. Modules 1-3 from NRPS7 incorporate dehydro-Ala, Gln, and beta-aminoisobutyric acid in the compound, which is released by cyclization. The beta-aminoisobutyric acid units are most likely not freely available to the NRPS, but can be synthesized from thymine, which requires a dehydrogenase, a monooxygenase, and an aminotransferase. The fusaristatin A cluster contains a cytochrome P450 monooxygenase (FGSG_08207) and an aminotransferase (FGSG_17085), which theoretically can perform two of the enzymatic steps. The enzymes may however also be involved in biosynthesis of dehydroalanine or modification of the polyketide. The dehydro-Ala residue can be a result of cyclization, where serine is dehydrated. The last gene of the cluster encodes a protein with an A/B barrel domain found in variable enzymes, which hampers functional prediction. The sequence is that of Aminotransferase FGSG_17085 from Gibberella zeae (strain ATCC MYA-4620 / CBS 123657 / FGSC 9075 / NRRL 31084 / PH-1) (Wheat head blight fungus).